Consider the following 465-residue polypeptide: UDP-N-acetylmuramoylalanine--D-glutamate ligase (465 aa).

127–133 (GSNGKST) contributes to the ATP binding site.

The protein belongs to the MurCDEF family.

The protein resides in the cytoplasm. The enzyme catalyses UDP-N-acetyl-alpha-D-muramoyl-L-alanine + D-glutamate + ATP = UDP-N-acetyl-alpha-D-muramoyl-L-alanyl-D-glutamate + ADP + phosphate + H(+). It participates in cell wall biogenesis; peptidoglycan biosynthesis. Cell wall formation. Catalyzes the addition of glutamate to the nucleotide precursor UDP-N-acetylmuramoyl-L-alanine (UMA). The polypeptide is UDP-N-acetylmuramoylalanine--D-glutamate ligase (Cereibacter sphaeroides (strain ATCC 17025 / ATH 2.4.3) (Rhodobacter sphaeroides)).